The sequence spans 889 residues: Phosphatidylinositol 3-kinase VPS34 (889 aa).

A C2 PI3K-type domain is found at 34–184 (ASEKLIDPQL…EWIDELVLKK (151 aa)). One can recognise a PIK helical domain in the interval 298–540 (SDKHVKPDAK…ESFLSRLNSN (243 aa)). The PI3K/PI4K catalytic domain occupies 607–873 (MIDQCNVFKS…LINDSVNALL (267 aa)). The segment at 613 to 619 (VFKSSLS) is G-loop. The catalytic loop stretch occupies residues 742–750 (GVGDRHLDN). The segment at 761 to 782 (HADFGYILGQDPKPFPPLMKLP) is activation loop.

Belongs to the PI3/PI4-kinase family. Type III PI4K subfamily. In terms of assembly, component of the autophagy-specific VPS34 PI3-kinase complex I composed of VPS15, VPS30, VPS34, ATG14 and ATG38; and of the VPS34 PI3-kinase complex II composed of VPS15, VPS30, VPS34 and VPS38. In terms of processing, autophosphorylated.

It localises to the golgi apparatus. Its subcellular location is the trans-Golgi network membrane. The protein resides in the endosome membrane. The enzyme catalyses a 1,2-diacyl-sn-glycero-3-phospho-(1D-myo-inositol) + ATP = a 1,2-diacyl-sn-glycero-3-phospho-(1D-myo-inositol-3-phosphate) + ADP + H(+). Its function is as follows. Multifunctional phosphatidylinositol 3-kinase that plays a role in signaling in modulation of host immune response, intracellular survival and virulence. Catalytic subunit of the autophagy-specific VPS34 PI3-kinase complex I essential to recruit the ATG8-phosphatidylinositol conjugate and the ATG12-ATG5 conjugate to the pre-autophagosomal structure. Also involved in endosome-to-Golgi retrograde transport as part of the VPS34 PI3-kinase complex II. This second complex is required for the endosome-to-Golgi retrieval of PEP1 and KEX2, and the recruitment of VPS5 and VPS7, two components of the retromer complex, to endosomal membranes (probably through the synthesis of a specific pool of phosphatidylinositol 3-phosphate recruiting the retromer to the endosomes). Finally, it might also be involved in ethanol tolerance and cell wall integrity. This chain is Phosphatidylinositol 3-kinase VPS34, found in Candida glabrata (strain ATCC 2001 / BCRC 20586 / JCM 3761 / NBRC 0622 / NRRL Y-65 / CBS 138) (Yeast).